We begin with the raw amino-acid sequence, 763 residues long: Dual specificity tyrosine-phosphorylation-regulated kinase 1A (763 aa).

At S14 the chain carries Phosphoserine. The segment at 33–56 is disordered; that stretch reads QMPHSHQYSDRRQPNISDQQVSAL. Positions 46–56 are enriched in polar residues; the sequence is PNISDQQVSAL. Y111 bears the Phosphotyrosine; by autocatalysis mark. The disordered stretch occupies residues 115 to 136; that stretch reads KKRRHQQGQGDDSSHKKERKVY. Residues 117 to 134 carry the Bipartite nuclear localization signal motif; the sequence is RRHQQGQGDDSSHKKERK. A Phosphotyrosine; by autocatalysis modification is found at Y140. Y145 bears the Phosphotyrosine mark. Residue Y159 is modified to Phosphotyrosine; by autocatalysis. One can recognise a Protein kinase domain in the interval 159–479; it reads YEIDSLIGKG…PYYALQHSFF (321 aa). 165-173 contributes to the ATP binding site; it reads IGKGSFGQV. Y177 carries the post-translational modification Phosphotyrosine; by autocatalysis. K188 contributes to the ATP binding site. A Phosphotyrosine; by autocatalysis modification is found at Y219. Residue 238–241 participates in ATP binding; sequence FEML. D287 functions as the Proton acceptor in the catalytic mechanism. Phosphoserine; by autocatalysis is present on S310. Y319 and Y321 each carry phosphotyrosine; by autocatalysis. T402 carries the phosphothreonine; by autocatalysis modification. The segment at 408-442 is disordered; sequence TKDGKREYKPPGTRKLHNILGVETGGPGGRRAGES. Residue Y449 is modified to Phosphotyrosine; by autocatalysis. Over residues 485-501 the composition is skewed to polar residues; sequence EGTNTSNSVSTSPAMEQ. 3 disordered regions span residues 485 to 540, 596 to 679, and 744 to 763; these read EGTN…HSGG, NALH…GNQA, and DREESPMTGVCVQQSPVASS. Residues 502–525 are compositionally biased toward low complexity; the sequence is SQSSGTTSSTSSSSGGSSGTSNSG. A phosphoserine mark is found at S529 and S538. The histidine-rich domain (HRD) stretch occupies residues 595-625; it reads QNALHHHHGNSSHHHHHHHHHHHHHGQQALG. Positions 598–620 are enriched in basic residues; that stretch reads LHHHHGNSSHHHHHHHHHHHHHG. Polar residues predominate over residues 634–645; that stretch reads NSPTNSSSTQDS. Positions 654-672 are enriched in low complexity; it reads SMTSLSSSTTSSSTSSSST. Phosphoserine is present on residues S748 and S758. The segment covering 754–763 has biased composition (polar residues); the sequence is CVQQSPVASS.

It belongs to the protein kinase superfamily. CMGC Ser/Thr protein kinase family. MNB/DYRK subfamily. In terms of assembly, interacts with RAD54L2/ARIP4. Interacts with CRY2. Interacts with RANBP9. Interacts with WDR68. Interacts with SIRT1. Can also autophosphorylate on serine and threonine residues (in vitro). Autophosphorylated on numerous tyrosine residues. As to expression, detected in brain (at protein level). Ubiquitous.

Its subcellular location is the nucleus speckle. The enzyme catalyses L-seryl-[protein] + ATP = O-phospho-L-seryl-[protein] + ADP + H(+). It carries out the reaction L-threonyl-[protein] + ATP = O-phospho-L-threonyl-[protein] + ADP + H(+). It catalyses the reaction L-tyrosyl-[protein] + ATP = O-phospho-L-tyrosyl-[protein] + ADP + H(+). The catalysed reaction is [DNA-directed RNA polymerase] + ATP = phospho-[DNA-directed RNA polymerase] + ADP + H(+). With respect to regulation, inhibited by RANBP9. Inhibited by harmine, leucettamine B and leucettine L41. Functionally, dual-specificity kinase which possesses both serine/threonine and tyrosine kinase activities. Exhibits a substrate preference for proline at position P+1 and arginine at position P-3. Plays an important role in double-strand breaks (DSBs) repair following DNA damage. Mechanistically, phosphorylates RNF169 and increases its ability to block accumulation of TP53BP1 at the DSB sites thereby promoting homologous recombination repair (HRR). Also acts as a positive regulator of transcription by acting as a CTD kinase that mediates phosphorylation of the CTD (C-terminal domain) of the large subunit of RNA polymerase II (RNAP II) POLR2A. May play a role in a signaling pathway regulating nuclear functions of cell proliferation. Modulates alternative splicing by phosphorylating the splice factor SRSF6. Has pro-survival function and negatively regulates the apoptotic process. Promotes cell survival upon genotoxic stress through phosphorylation of SIRT1. This in turn inhibits p53/TP53 activity and apoptosis. Phosphorylates SEPTIN4, SEPTIN5 and SF3B1 at 'Thr-434'. The protein is Dual specificity tyrosine-phosphorylation-regulated kinase 1A (Dyrk1a) of Rattus norvegicus (Rat).